Consider the following 259-residue polypeptide: Haloacid dehalogenase-like hydrolase domain-containing protein 2 (259 aa).

2 residues coordinate Mg(2+): Asp-13 and Ser-15. Substrate-binding positions include 13–15 (DLS) and 46–47 (TN). Residues 49-71 (TKESKRDLLERLRKLEFDISEEE) adopt a coiled-coil conformation. Residue Lys-50 is modified to N6-succinyllysine. Lys-179 is a substrate binding site. Mg(2+) is bound at residue Asp-204.

The protein belongs to the HAD-like hydrolase superfamily. It depends on Mg(2+) as a cofactor.

This chain is Haloacid dehalogenase-like hydrolase domain-containing protein 2 (Hdhd2), found in Rattus norvegicus (Rat).